The following is a 437-amino-acid chain: Enolase (437 aa).

Gln-162 is a binding site for (2R)-2-phosphoglycerate. Residue Glu-204 is the Proton donor of the active site. Residues Asp-251, Glu-297, and Asp-324 each coordinate Mg(2+). Positions 349, 378, 379, and 400 each coordinate (2R)-2-phosphoglycerate. Lys-349 (proton acceptor) is an active-site residue.

Belongs to the enolase family. Requires Mg(2+) as cofactor.

It localises to the cytoplasm. The protein localises to the secreted. The protein resides in the cell surface. The catalysed reaction is (2R)-2-phosphoglycerate = phosphoenolpyruvate + H2O. Its pathway is carbohydrate degradation; glycolysis; pyruvate from D-glyceraldehyde 3-phosphate: step 4/5. In terms of biological role, catalyzes the reversible conversion of 2-phosphoglycerate (2-PG) into phosphoenolpyruvate (PEP). It is essential for the degradation of carbohydrates via glycolysis. The sequence is that of Enolase from Chlorobium phaeobacteroides (strain DSM 266 / SMG 266 / 2430).